The chain runs to 1196 residues: RNA-dependent RNA polymerase 6 (1196 aa).

This sequence belongs to the RdRP family. In terms of assembly, interacts with SGS3. As to expression, widely expressed.

The protein localises to the cytoplasmic granule. Its subcellular location is the nucleus. The catalysed reaction is RNA(n) + a ribonucleoside 5'-triphosphate = RNA(n+1) + diphosphate. RNA-dependent RNA polymerase involved in post-transcriptional gene silencing (PTGS). Possesses ssRNA and ssDNA-dependent polymerase activity, but does not have priming activity. Possesses in vitro 3' nucleotidyltransferase activity in the presence of UTP as single nucleotide. Required for the production of 21 nucleotide trans-acting small interfering RNAs (ta-siRNAs) derived from TAS1, TAS2 and TAS3 endogenous transcripts. Acts in the RDR6/SGS3/DCL4/AGO7 ta-siRNA pathway involved in leaf developmental timing. Required for the production of natural siRNAs (nat-siRNAs) derived from cis-natural antisense transcripts. Required for the production of 24 nucleotide nat-siRNAs derived from the stress-related P5CDH-SRO5 antisense gene pair. Required for PTGS induced by transgene direct repeats. Plays an essential role in transitive silencing of transgenes by processing secondary siRNAs. This pathway, which requires DCL2 and DCL4, amplifies silencing by using the target RNA as substrate to generate secondary siRNAs, providing an efficient mechanism for long-distance silencing. Involved in the biogenesis of secondary siRNAs which require 22 nucleotide miRNAs associated to AGO1. Participates synergistically with AS1 and AS2 to proper plant development by repressing the miR165 and miR166 microRNAs (independently of AGO10) that may lead to mRNA degradation of genes in the class III HD-ZIP family. Required for the production of some small RNAs derived from the crucifer-infecting tobamovirus (TMV-cg). Required for sense virus-induced post-transcriptional gene silencing (S-PTGS). This chain is RNA-dependent RNA polymerase 6 (RDR6), found in Arabidopsis thaliana (Mouse-ear cress).